A 527-amino-acid polypeptide reads, in one-letter code: Inosine-5'-monophosphate dehydrogenase (527 aa).

2 consecutive CBS domains span residues 121–183 (FILD…VTAV) and 184–240 (MSTD…PLAS). NAD(+) contacts are provided by residues 277-279 (DSS) and 327-329 (GMG). The K(+) site is built by G329 and G331. Residue S332 participates in IMP binding. C334 provides a ligand contact to K(+). C334 serves as the catalytic Thioimidate intermediate. Residues 367-369 (DGG) and 390-391 (GS) each bind IMP. The active-site Proton acceptor is the R440. IMP is bound at residue Q452. The interval 506–527 (ASAQTEGNVHGLHSHEKKLYSS) is disordered. Residues E511 and G512 each coordinate K(+). Basic and acidic residues predominate over residues 518-527 (HSHEKKLYSS).

This sequence belongs to the IMPDH/GMPR family. As to quaternary structure, homotetramer. Requires K(+) as cofactor.

The protein resides in the cytoplasm. The catalysed reaction is IMP + NAD(+) + H2O = XMP + NADH + H(+). It participates in purine metabolism; XMP biosynthesis via de novo pathway; XMP from IMP: step 1/1. With respect to regulation, mycophenolic acid (MPA) is a non-competitive inhibitor that prevents formation of the closed enzyme conformation by binding to the same site as the amobile flap. In contrast, mizoribine monophosphate (MZP) is a competitive inhibitor that induces the closed conformation. MPA is a potent inhibitor of mammalian IMPDHs but a poor inhibitor of the bacterial enzymes. MZP is a more potent inhibitor of bacterial IMPDH. Its function is as follows. Catalyzes the conversion of inosine 5'-phosphate (IMP) to xanthosine 5'-phosphate (XMP), the first committed and rate-limiting step in the de novo synthesis of guanine nucleotides, and therefore plays an important role in the regulation of cell growth. Part of the gene cluster that mediates the biosynthesis of mycophenolic acid (MPA), the first isolated antibiotic natural product in the world. Does not play a role in the biosynthesis of MPA, but is involved in self resistance to MPA, since MPA acts as an inhibitor of IMP dehydrogenases. In Penicillium brevicompactum, this protein is Inosine-5'-monophosphate dehydrogenase.